The chain runs to 186 residues: Putative transcriptional regulator encoded by LINC00473 (186 aa).

A disordered region spans residues 1-62 (MELSAAAGRR…RDCTPTCTNA (62 aa)). The segment covering 18 to 40 (FTGRHRTERSQERGSTPRKERSM) has biased composition (basic and acidic residues).

Functionally, may play a role in cAMP-mediated gene transcription. This is Putative transcriptional regulator encoded by LINC00473 (LINC00473) from Homo sapiens (Human).